Reading from the N-terminus, the 579-residue chain is MGVGTLLNGLLVSVVAALLWKYSKLSEHAALLEEELHMTRRSQELSQAHIDYHVALQALQEHGTRMVCTGKMHTDRICRFDYLCYCSEAEEFVFFHSNSSVMLPNLGSRRFQPALLDLSSVEDHNTQYFNFLELPAATLRFLPKPVFVPDVALILNRFNPDNLMHVFHDDLLPAFYTMKQFLDLDEDARLVFMEGWDEGPHFHLYRLLSDKQPLLKEQLRNFGKLMCFTKSYIGLSKMTTWYQYGFVQPQGPKANILVSGNEIRHFAKVLMEKMNVTRAEGGQEDEYIVVFSRSSTRLILNQAELVMALAQEFQMRVVTVSLEEQSFASIVQVIGAASMLVSMHGAQLITALFLPPGAVVVELFPFAVNPDQYTPYRTLAALPGMDLHYISWRNTEEENTITHPDRPWEQGGIAHLEKEEQERIVASKDVPRHLCCRNPEWLFRIYQDTFVDIPSFLEALQAGLKAKPVWKKSKLSGGLHPGRVRDARCQTSVQTSSEAKLTVSWQMPWNLKYLKVREVKYEVWIQEQGENTYMPYILPQQNYTFSDNIKPFTTYLVWVRCIFNKNLLGPFADVLMCRT.

Residues 1-4 lie on the Cytoplasmic side of the membrane; sequence MGVG. A helical; Signal-anchor for type II membrane protein transmembrane segment spans residues 5 to 25; sequence TLLNGLLVSVVAALLWKYSKL. The Lumenal portion of the chain corresponds to 26-579; it reads SEHAALLEEE…PFADVLMCRT (554 aa). N-linked (GlcNAc...) asparagine glycosylation is found at Asn98, Asn275, and Asn542. The region spanning 480 to 579 is the Fibronectin type-III domain; it reads HPGRVRDARC…PFADVLMCRT (100 aa).

It belongs to the glycosyltransferase 61 family.

It localises to the endoplasmic reticulum membrane. It catalyses the reaction 3-O-(alpha-D-mannosyl)-L-threonyl-[protein] + UDP-N-acetyl-alpha-D-glucosamine = 3-O-(N-acetyl-beta-D-glucosaminyl-(1-&gt;4)-alpha-D-mannosyl)-L-threonyl-[protein] + UDP + H(+). The protein operates within protein modification; protein glycosylation. Functionally, O-linked mannose beta-1,4-N-acetylglucosaminyltransferase that transfers UDP-N-acetyl-D-glucosamine to the 4-position of the mannose to generate N-acetyl-D-glucosamine-beta-1,4-O-D-mannosylprotein. Involved in the biosynthesis of the phosphorylated O-mannosyl trisaccharide (N-acetylgalactosamine-beta-3-N-acetylglucosamine-beta-4-(phosphate-6-)mannose), a carbohydrate structure present in alpha-dystroglycan (DAG1), which is required for binding laminin G-like domain-containing extracellular proteins with high affinity. The protein is Protein O-linked-mannose beta-1,4-N-acetylglucosaminyltransferase 2 (pomgnt2) of Tetraodon nigroviridis (Spotted green pufferfish).